The following is a 167-amino-acid chain: Bacterial non-heme ferritin (167 aa).

Residues 1 to 145 form the Ferritin-like diiron domain; that stretch reads MLSKDIIKLL…DILDKIELIG (145 aa). Positions 17, 50, 53, 94, and 127 each coordinate Fe cation.

It belongs to the ferritin family. Prokaryotic subfamily. In terms of assembly, homooligomer of 24 subunits that assemble into a spherical protein shell (12 +/- 1 nM diameter) that can sequester at least 2000 iron atoms.

It is found in the cytoplasm. The enzyme catalyses 4 Fe(2+) + O2 + 6 H2O = 4 iron(III) oxide-hydroxide + 12 H(+). Iron-storage protein. This is Bacterial non-heme ferritin (ftnA) from Helicobacter pylori (strain ATCC 700392 / 26695) (Campylobacter pylori).